The sequence spans 511 residues: MATPLRYALIFLLWAMVAVIYAPLIPAALTLISPALSLTHWQALFADPQLPQALLATLVSTTIAAVGALLIALLVIVALWPGPKWQRMCARLPWLLAIPHVAFATSALLLFADGGLLYDYFPYFTPPMDRFGIGLGLTLAVKESAFLLWILAAVLSEKWLLQQVIVLDSLGYSRWQCLNWLLLPSVAPALAMAMLAIVAWSLSVVDVAIILGPGNPPTLAVISWQWLTQGDIDQQTKGALASLLLMLLLAAYVLLSYLLWRSWRRTIPRVDGVRKPATPLLPGNTLAIFLPLTGVLCVVLLAILADQSTINSEALINSLTMGLVATFIALLLLLLWLEWGPQRRQLWLWLPILLPALPLVAGQYTLALWLKLDGSWTAVVWGHLLWVMPWMLFILQPAWQRIDSRLILIAQTLGWSRAKIFFYVKCPLMLRPVLIAFAVGFAVGIAQYMPTLWLGAGRFPTLTTEAVALSSGGSNGILAAQALWQLLLPLIIFALTALVAKWVGYVRQGLR.

Topologically, residues 1–8 (MATPLRYA) are cytoplasmic. Residues 9–29 (LIFLLWAMVAVIYAPLIPAAL) traverse the membrane as a helical segment. The Periplasmic portion of the chain corresponds to 30 to 62 (TLISPALSLTHWQALFADPQLPQALLATLVSTT). The ABC transmembrane type-1 1 domain occupies 54 to 255 (LLATLVSTTI…MLLLAAYVLL (202 aa)). A helical membrane pass occupies residues 63–83 (IAAVGALLIALLVIVALWPGP). The Cytoplasmic portion of the chain corresponds to 84–91 (KWQRMCAR). A helical transmembrane segment spans residues 92–112 (LPWLLAIPHVAFATSALLLFA). The Periplasmic segment spans residues 113 to 130 (DGGLLYDYFPYFTPPMDR). Residues 131 to 151 (FGIGLGLTLAVKESAFLLWIL) form a helical membrane-spanning segment. The Cytoplasmic portion of the chain corresponds to 152–189 (AAVLSEKWLLQQVIVLDSLGYSRWQCLNWLLLPSVAPA). The chain crosses the membrane as a helical span at residues 190–210 (LAMAMLAIVAWSLSVVDVAII). At 211 to 239 (LGPGNPPTLAVISWQWLTQGDIDQQTKGA) the chain is on the periplasmic side. Residues 240 to 260 (LASLLLMLLLAAYVLLSYLLW) form a helical membrane-spanning segment. Over 261 to 284 (RSWRRTIPRVDGVRKPATPLLPGN) the chain is Cytoplasmic. A helical membrane pass occupies residues 285-305 (TLAIFLPLTGVLCVVLLAILA). Topologically, residues 306–318 (DQSTINSEALINS) are periplasmic. The ABC transmembrane type-1 2 domain maps to 315–496 (LINSLTMGLV…LLPLIIFALT (182 aa)). A helical transmembrane segment spans residues 319 to 339 (LTMGLVATFIALLLLLLWLEW). Residues 340–345 (GPQRRQ) are Cytoplasmic-facing. A helical transmembrane segment spans residues 346–366 (LWLWLPILLPALPLVAGQYTL). Residues 367–374 (ALWLKLDG) lie on the Periplasmic side of the membrane. A helical transmembrane segment spans residues 375-395 (SWTAVVWGHLLWVMPWMLFIL). Residues 396-432 (QPAWQRIDSRLILIAQTLGWSRAKIFFYVKCPLMLRP) lie on the Cytoplasmic side of the membrane. Residues 433-453 (VLIAFAVGFAVGIAQYMPTLW) traverse the membrane as a helical segment. Residues 454–485 (LGAGRFPTLTTEAVALSSGGSNGILAAQALWQ) lie on the Periplasmic side of the membrane. Residues 486–506 (LLLPLIIFALTALVAKWVGYV) form a helical membrane-spanning segment. At 507–511 (RQGLR) the chain is on the cytoplasmic side.

Belongs to the binding-protein-dependent transport system permease family.

It is found in the cell inner membrane. Probably part of the binding-protein-dependent transport system YnjCD. Probably responsible for the translocation of the substrate across the membrane. The polypeptide is Inner membrane ABC transporter permease protein YnjC (ynjC) (Escherichia coli (strain K12)).